The chain runs to 808 residues: Potassium transporter 5 (808 aa).

At 1 to 65 (MAEEVGETRG…NQVNWKKTLS (65 aa)) the chain is on the cytoplasmic side. A helical transmembrane segment spans residues 66 to 86 (LTFQSIGVVYGDIGTSPLYVY). Residues 87-102 (ESTFPDKIGSKEDILG) are Extracellular-facing. Residues 103 to 123 (VLSLIIYTLVLLPMLKYVFIV) form a helical membrane-spanning segment. Topologically, residues 124-189 (LRANDNGDGG…EKMENSKNIK (66 aa)) are cytoplasmic. The helical transmembrane segment at 190–210 (ILLFLVTILGTSMVIGDGVLT) threads the bilayer. At 211–221 (PCISVLSAVSG) the chain is on the extracellular side. The helical transmembrane segment at 222–242 (IGSLGQDAVVGISIAILIVLF) threads the bilayer. At 243–251 (CAQRLGTDK) the chain is on the cytoplasmic side. The chain crosses the membrane as a helical span at residues 252–272 (VGFSFAPIILLWFSFIGGIGL). Residues 273 to 302 (YNLFKYDVSVLRAFNPKYMFDYFKRNGKQG) are Extracellular-facing. The chain crosses the membrane as a helical span at residues 303-323 (WISLGGVVLAVTGTEAMFADL). Residues 324–327 (GHFN) lie on the Cytoplasmic side of the membrane. A helical transmembrane segment spans residues 328 to 348 (VQAIQISFSGIVFPALLCAYA). The Extracellular segment spans residues 349–379 (GQAAYLTKFPDDVSKTFYKSIPDPLYWPTFV). The chain crosses the membrane as a helical span at residues 380–400 (VAVAAAIIASQAMISGAFAII). Residues 401–424 (SQSLSLGCFPRVKVIHTSAKYEGQ) lie on the Cytoplasmic side of the membrane. A helical transmembrane segment spans residues 425–445 (VYIPEVNYILMIACIMVCLGF). Residues 446–456 (KTTEKIGNAYG) lie on the Extracellular side of the membrane. Residues 457 to 477 (IAVVAVMVITTCMVTIIMLVV) traverse the membrane as a helical segment. Residues 478 to 482 (WRTKM) are Cytoplasmic-facing. Residues 483-503 (IWIAFFFFGFICIEAVYLSSV) form a helical membrane-spanning segment. Topologically, residues 504 to 510 (LYKFKDG) are extracellular. Residues 511 to 531 (GFLPLAFSFFLMIIMGIWHYI) form a helical membrane-spanning segment. Residues 532 to 808 (HKERYMYELK…LLRVGMTYEI (277 aa)) lie on the Cytoplasmic side of the membrane. The disordered stretch occupies residues 699–722 (LQQPNPSRVSSGSIHSNSGIKSTK).

Belongs to the HAK/KUP transporter (TC 2.A.72.3) family. As to expression, expressed in the roots.

The protein localises to the cell membrane. The catalysed reaction is K(+)(in) = K(+)(out). Functionally, high-affinity potassium transporter that functions under low potassium conditions. Involved in the positive regulation of salt tolerance under salt stress. The polypeptide is Potassium transporter 5 (Manihot esculenta (Cassava)).